The chain runs to 852 residues: DNA polymerase kappa (852 aa).

The 256-residue stretch at 102-357 folds into the UmuC domain; that stretch reads IVHVDMDAFY…LPIRKVSGIG (256 aa). Mg(2+) is bound by residues Asp-106 and Asp-197. Residues 252-273 are disordered; sequence FEDSPPDLQPQGSPFQLNSEEQ. Residues 261-273 are compositionally biased toward polar residues; that stretch reads PQGSPFQLNSEEQ. 2 UBZ4-type zinc fingers span residues 619-649 and 761-791; these read TFIC…DGPS and ALVC…NKGI. Cys-622, Cys-625, His-640, Cys-644, Cys-764, Cys-767, His-782, and Cys-786 together coordinate Zn(2+). A disordered region spans residues 798–852; sequence SEGNSVKQPKESSRSTDRLQKASGRTKRPGTKTKSSTLKKTKPRDPRHTLDGFFK. The segment covering 805–817 has biased composition (basic and acidic residues); it reads QPKESSRSTDRLQ. The segment covering 821 to 839 has biased composition (basic residues); that stretch reads GRTKRPGTKTKSSTLKKTK. A compositionally biased stretch (basic and acidic residues) spans 840 to 852; that stretch reads PRDPRHTLDGFFK.

It belongs to the DNA polymerase type-Y family. Interacts with PCNA. Interacts with REV1. Requires Mg(2+) as cofactor. Mn(2+) is required as a cofactor. Detected at low levels in heart, brain, lung, liver, kidney and testis.

It is found in the nucleus. It catalyses the reaction DNA(n) + a 2'-deoxyribonucleoside 5'-triphosphate = DNA(n+1) + diphosphate. Functionally, DNA polymerase specifically involved in DNA repair. Plays an important role in translesion synthesis, where the normal high-fidelity DNA polymerases cannot proceed and DNA synthesis stalls. Depending on the context, it inserts the correct base, but causes frequent base transitions, transversions and frameshifts. Lacks 3'-5' proofreading exonuclease activity. Forms a Schiff base with 5'-deoxyribose phosphate at abasic sites, but does not have lyase activity. This is DNA polymerase kappa (Polk) from Mus musculus (Mouse).